A 359-amino-acid chain; its full sequence is Mineralocorticoid receptor (359 aa).

The nuclear receptor DNA-binding region spans 1–49 (FKRAVEGQHNYLCAGRNDCIIDKIRRKNCPACRVRKCLQAGMNLGARKS). Cys-13, Cys-19, Cys-29, and Cys-32 together coordinate Zn(2+). The NR C4-type zinc finger occupies 13–37 (CAGRNDCIIDKIRRKNCPACRVRKC). Positions 48–96 (KSKKPGKLKGVNEDSTPTKEGGQTCPGSGGGYLSSGEKELSTSPTNALV) are disordered. The segment at 50–107 (KKPGKLKGVNEDSTPTKEGGQTCPGSGGGYLSSGEKELSTSPTNALVPHGPGGGLVTP) is hinge. Positions 108–339 (YLPPSICSVL…EFPEMLVEII (232 aa)) constitute an NR LBD domain. 21-hydroxyprogesterone-binding residues include Asn-145 and Gln-151. 2 residues coordinate aldosterone: Asn-145 and Gln-151. Residues Asn-145 and Gln-151 each coordinate progesterone. Positions 157–160 (KWAK) are important for coactivator binding. The 21-hydroxyprogesterone site is built by Arg-192 and Thr-320. Arg-192 and Thr-320 together coordinate aldosterone. Progesterone contacts are provided by Arg-192 and Thr-320.

It belongs to the nuclear hormone receptor family. NR3 subfamily.

The protein resides in the cytoplasm. The protein localises to the nucleus. Functionally, receptor for both mineralocorticoids (MC) such as cortisol. Binds to mineralocorticoid response elements (MRE) and transactivates target genes. The effect of MC is to increase ion and water transport and thus raise extracellular fluid volume and blood pressure and lower potassium levels. The polypeptide is Mineralocorticoid receptor (nr3c2) (Oncorhynchus mykiss (Rainbow trout)).